Reading from the N-terminus, the 431-residue chain is COBRA-like protein 4 (431 aa).

The N-terminal stretch at 1 to 20 (MRLLFSFCFFFFMIIFTATA) is a signal peptide. Residues Asn-29, Asn-154, Asn-162, Asn-201, Asn-226, Asn-306, Asn-321, and Asn-340 are each glycosylated (N-linked (GlcNAc...) asparagine). A lipid anchor (GPI-anchor amidated asparagine) is attached at Asn-414. Residues 415 to 431 (FASFSLTILLLLFISIW) constitute a propeptide, removed in mature form.

Belongs to the COBRA family. As to expression, expressed in roots, stems, leaves, flowers and siliques.

It is found in the cell membrane. In Arabidopsis thaliana (Mouse-ear cress), this protein is COBRA-like protein 4 (COBL4).